The sequence spans 1214 residues: [F-actin]-monooxygenase mical1 (1214 aa).

Residues 1–488 (MVNPLDSVNP…KRLYEAEEQE (488 aa)) form a monooxygenase domain region. Residues Cys96, 115–117 (EKR), 122–124 (RNN), Phe182, Tyr292, and Asp392 contribute to the FAD site. The interval 484 to 505 (AEEQESKPNKLKKPDIKAKPRK) is disordered. Residues 508 to 614 (MKRLEELLSW…YLTQIRNALT (107 aa)) form the Calponin-homology (CH) domain. A disordered region spans residues 649–676 (HKDRLASVKGPRQQNMKEKEEKKDVKEE). The span at 663–676 (NMKEKEEKKDVKEE) shows a compositional bias: basic and acidic residues. The LIM zinc-binding domain occupies 686 to 748 (EPCYFCKKHL…ELHSLAEEEE (63 aa)). The Zn(2+) site is built by Cys688, Cys691, His709, Cys712, Cys715, Cys718, Cys738, and His741. The segment at 747 to 1019 (EEGDEGHGGA…DDEDEDEEDL (273 aa)) is disordered. Residues 796–815 (PDFDESTEFPAPDQDEPPDL) show a composition bias toward acidic residues. Positions 828 to 841 (SAENTNMENQQHNI) are enriched in polar residues. Low complexity predominate over residues 910–922 (RGSSSAASTSSSS). The segment covering 974–987 (SPWNLSSPRLQQRF) has biased composition (polar residues). Residues 1003-1019 (VSEDDNEDDEDEDEEDL) show a composition bias toward acidic residues. Positions 1053–1199 (KMTEIQRFHK…EVNDQFNSSL (147 aa)) constitute a bMERB domain. A coiled-coil region spans residues 1061–1131 (HKAQSIQRRL…DLMVASRQLE (71 aa)). The disordered stretch occupies residues 1194–1214 (QFNSSLDAKRRSTTASQVHWE).

It belongs to the Mical family. It depends on FAD as a cofactor.

The protein localises to the cytoplasm. It is found in the cytoskeleton. Its subcellular location is the midbody. It localises to the endosome membrane. It catalyses the reaction L-methionyl-[F-actin] + NADPH + O2 + H(+) = L-methionyl-(R)-S-oxide-[F-actin] + NADP(+) + H2O. The enzyme catalyses NADPH + O2 + H(+) = H2O2 + NADP(+). Functionally, monooxygenase that promotes depolymerization of F-actin by mediating oxidation of specific methionine residues on actin to form methionine-sulfoxide, resulting in actin filament disassembly and prevent repolymerization. May be involved in endosomal tubule extension and neosynthesized protein export. The sequence is that of [F-actin]-monooxygenase mical1 (mical1) from Danio rerio (Zebrafish).